The chain runs to 170 residues: Adenine phosphoribosyltransferase (170 aa).

The protein belongs to the purine/pyrimidine phosphoribosyltransferase family. In terms of assembly, homodimer.

It is found in the cytoplasm. The catalysed reaction is AMP + diphosphate = 5-phospho-alpha-D-ribose 1-diphosphate + adenine. It participates in purine metabolism; AMP biosynthesis via salvage pathway; AMP from adenine: step 1/1. Catalyzes a salvage reaction resulting in the formation of AMP, that is energically less costly than de novo synthesis. This chain is Adenine phosphoribosyltransferase, found in Mycoplasma mycoides subsp. mycoides SC (strain CCUG 32753 / NCTC 10114 / PG1).